Here is a 259-residue protein sequence, read N- to C-terminus: DNA terminal protein (259 aa).

Tyrosine 190 is subject to O-(5'-phospho-DNA)-tyrosine. Residues lysine 243–valine 259 carry the Nuclear localization signal motif.

It belongs to the tectivirus DNA terminal protein family. In terms of assembly, heterodimer with viral polymerase. Binds to ssDNA.

The protein resides in the virion. It localises to the host nucleus. Acts as a primer for viral genomic replication. DNA terminal protein is covalently linked to the 5'-ends of both strands of the genome through a phosphodiester bond between the beta-hydroxyl group of a tyrosine residue and the 5'-phosphate of the terminal deoxyadenylate. This protein is essential for DNA replication and is involved in the priming of DNA elongation. In Enterobacteria phage PRD1 (Bacteriophage PRD1), this protein is DNA terminal protein (VIII).